The chain runs to 181 residues: Inner membrane-spanning protein YciB (181 aa).

5 helical membrane passes run 22–42 (IYTA…LTYV), 50–70 (MQLI…FLHD), 80–100 (IVYA…RPII), 118–138 (INYA…YVAF), and 148–168 (FKVF…GMYV).

The protein belongs to the YciB family.

It is found in the cell inner membrane. Plays a role in cell envelope biogenesis, maintenance of cell envelope integrity and membrane homeostasis. The chain is Inner membrane-spanning protein YciB from Aliivibrio salmonicida (strain LFI1238) (Vibrio salmonicida (strain LFI1238)).